We begin with the raw amino-acid sequence, 384 residues long: N-acetyldiaminopimelate deacetylase (384 aa).

Aspartate 73 is a catalytic residue. Glutamate 132 acts as the Proton acceptor in catalysis.

Belongs to the peptidase M20A family. N-acetyldiaminopimelate deacetylase subfamily.

The catalysed reaction is N-acetyl-(2S,6S)-2,6-diaminopimelate + H2O = (2S,6S)-2,6-diaminopimelate + acetate. It participates in amino-acid biosynthesis; L-lysine biosynthesis via DAP pathway; LL-2,6-diaminopimelate from (S)-tetrahydrodipicolinate (acetylase route): step 3/3. Its function is as follows. Catalyzes the conversion of N-acetyl-diaminopimelate to diaminopimelate and acetate. The chain is N-acetyldiaminopimelate deacetylase from Limosilactobacillus fermentum (strain NBRC 3956 / LMG 18251) (Lactobacillus fermentum).